The primary structure comprises 468 residues: MAQAGSASPLFAVVLAAGKGTRMKSNRAKVLHTLCGVPMVNYVIGAIRPLVPERLLVVVGHQAEQVRAVLPEDAEPVLQPEQRGTGDAVRVALEAIPEEEGVLLVVNGDGPLISDRTLGELLERHRSAGVGATVLVAELPDPSGLGRVREDAGVVRITEERDATEAERRNRLCNLGLYAFELPELRRAIREISSGAGRGELYLTDVLEIIGRRSRAVTYRLKDLEEANLVNDRSQLARAEEILRRRILDAHMKEGVTVRDPVSTHIEASVEIGRDTVILPGTFLRGRTRIGSDCVIGPSTDLVDTVVEDGATVEHSVGRGARVGRGAAVGPYAYLRPGTVLEEGSKVGAFCEVKNTRVGARSKVPHLSYVGDAEIGEDANLGAGTITANYDGAKKHRTVIEDGAFTGINTNLIAPVTIGQGAYLGAGSVVNKDIPPGKLAVGAPARVIRDAPGARSSSGDRRRARTEG.

Residues 1 to 233 (MAQAGSASPL…LEEANLVNDR (233 aa)) form a pyrophosphorylase region. Residues 15–18 (LAAG), lysine 29, glutamine 79, and 84–85 (GT) each bind UDP-N-acetyl-alpha-D-glucosamine. Mg(2+) is bound at residue aspartate 109. UDP-N-acetyl-alpha-D-glucosamine is bound by residues glycine 146, glutamate 159, asparagine 174, and asparagine 231. Asparagine 231 contacts Mg(2+). The tract at residues 234–254 (SQLARAEEILRRRILDAHMKE) is linker. Positions 255 to 468 (GVTVRDPVST…GDRRRARTEG (214 aa)) are N-acetyltransferase. Residues arginine 336 and lysine 354 each coordinate UDP-N-acetyl-alpha-D-glucosamine. The Proton acceptor role is filled by histidine 366. 2 residues coordinate UDP-N-acetyl-alpha-D-glucosamine: tyrosine 369 and asparagine 380. Acetyl-CoA-binding positions include alanine 383, 389-390 (NY), and alanine 426.

The protein in the N-terminal section; belongs to the N-acetylglucosamine-1-phosphate uridyltransferase family. It in the C-terminal section; belongs to the transferase hexapeptide repeat family. As to quaternary structure, homotrimer. Mg(2+) is required as a cofactor.

Its subcellular location is the cytoplasm. The catalysed reaction is alpha-D-glucosamine 1-phosphate + acetyl-CoA = N-acetyl-alpha-D-glucosamine 1-phosphate + CoA + H(+). The enzyme catalyses N-acetyl-alpha-D-glucosamine 1-phosphate + UTP + H(+) = UDP-N-acetyl-alpha-D-glucosamine + diphosphate. It functions in the pathway nucleotide-sugar biosynthesis; UDP-N-acetyl-alpha-D-glucosamine biosynthesis; N-acetyl-alpha-D-glucosamine 1-phosphate from alpha-D-glucosamine 6-phosphate (route II): step 2/2. It participates in nucleotide-sugar biosynthesis; UDP-N-acetyl-alpha-D-glucosamine biosynthesis; UDP-N-acetyl-alpha-D-glucosamine from N-acetyl-alpha-D-glucosamine 1-phosphate: step 1/1. Its pathway is bacterial outer membrane biogenesis; LPS lipid A biosynthesis. In terms of biological role, catalyzes the last two sequential reactions in the de novo biosynthetic pathway for UDP-N-acetylglucosamine (UDP-GlcNAc). The C-terminal domain catalyzes the transfer of acetyl group from acetyl coenzyme A to glucosamine-1-phosphate (GlcN-1-P) to produce N-acetylglucosamine-1-phosphate (GlcNAc-1-P), which is converted into UDP-GlcNAc by the transfer of uridine 5-monophosphate (from uridine 5-triphosphate), a reaction catalyzed by the N-terminal domain. This is Bifunctional protein GlmU from Rubrobacter xylanophilus (strain DSM 9941 / JCM 11954 / NBRC 16129 / PRD-1).